The chain runs to 272 residues: 2-dehydro-3-deoxyphosphooctonate aldolase (272 aa).

It belongs to the KdsA family.

The protein resides in the cytoplasm. The catalysed reaction is D-arabinose 5-phosphate + phosphoenolpyruvate + H2O = 3-deoxy-alpha-D-manno-2-octulosonate-8-phosphate + phosphate. Its pathway is carbohydrate biosynthesis; 3-deoxy-D-manno-octulosonate biosynthesis; 3-deoxy-D-manno-octulosonate from D-ribulose 5-phosphate: step 2/3. It functions in the pathway bacterial outer membrane biogenesis; lipopolysaccharide biosynthesis. This is 2-dehydro-3-deoxyphosphooctonate aldolase from Trichlorobacter lovleyi (strain ATCC BAA-1151 / DSM 17278 / SZ) (Geobacter lovleyi).